A 675-amino-acid chain; its full sequence is MSSCFKSSVSLFSVFLFMILKTVTSDPTYLYHICPNTTTYSRNSSYLTNLRTVLSSLSSPNAAYASLFDNAAAGEENDSNRVYGVFLCRGDVSAEICRDCVAFAANETLQRCPREKVAVIWYDECMVRYSNQSIVGQMRIRPGVFLTNKQNITENQVSRFNESLPALLIDVAVKAALSSRKFATEKANFTVFQTIYSLVQCTPDLTNQDCESCLRQVINYLPRCCDRSVGGRVIAPSCSFRYELYPFYNETIAAAPMAPPPSSTVTAPPLNIPSEKGKGKNLTVIVTAIAVPVSVCVLLLGAMCWLLARRRNNKLSAETEDLDEDGITSTETLQFQFSAIEAATNKFSESNKLGHGGFGEVYKGQLITGETVAIKRLSQGSTQGAEEFKNEVDVVAKLQHRNLAKLLGYCLDGEEKILVYEFVPNKSLDYFLFDNEKRRVLDWQRRYKIIEGIARGILYLHRDSRLTIIHRDLKASNILLDADMHPKISDFGMARIFGVDQTQANTKRIVGTYGYMSPEYAIHGKYSVKSDVYSFGVLVLELITGKKNSSFYEEDGLGDLVTYVWKLWVENSPLELVDEAMRGNFQTNEVIRCIHIALLCVQEDSSERPSMDDILVMMNSFTVTLPIPKRSGFLLRTMKDSRDPRSGGSASDHSATSKSLPLSVDDSSITIVYPR.

The first 25 residues, M1–S25, serve as a signal peptide directing secretion. Residues D26 to N281 lie on the Extracellular side of the membrane. Gnk2-homologous domains are found at residues T28–I134 and I140–F247. N-linked (GlcNAc...) asparagine glycans are attached at residues N36, N43, N77, N106, N131, N151, N161, N188, N249, and N281. The helical transmembrane segment at L282–A302 threads the bilayer. Residues M303–R675 are Cytoplasmic-facing. In terms of domain architecture, Protein kinase spans F347–T622. ATP contacts are provided by residues L353–V361 and K375. Phosphotyrosine is present on Y420. Catalysis depends on D472, which acts as the Proton acceptor. Phosphoserine is present on S476. At T512 the chain carries Phosphothreonine. Y520 carries the post-translational modification Phosphotyrosine. Residues M638–P661 form a disordered region. Positions G648–P661 are enriched in polar residues.

The protein belongs to the protein kinase superfamily. Ser/Thr protein kinase family. CRK subfamily.

It is found in the membrane. It carries out the reaction L-seryl-[protein] + ATP = O-phospho-L-seryl-[protein] + ADP + H(+). The catalysed reaction is L-threonyl-[protein] + ATP = O-phospho-L-threonyl-[protein] + ADP + H(+). The polypeptide is Cysteine-rich receptor-like protein kinase 25 (CRK25) (Arabidopsis thaliana (Mouse-ear cress)).